A 726-amino-acid polypeptide reads, in one-letter code: Catalase-peroxidase (726 aa).

Residues 1 to 33 form a disordered region; it reads MSTTDDTHNTLSTGKCPFHQGGHDRSAGAGTAS. A cross-link (tryptophyl-tyrosyl-methioninium (Trp-Tyr) (with M-252)) is located at residues 105–226; the sequence is WHGAGTYRSI…LGATEMGLIY (122 aa). Catalysis depends on His106, which acts as the Proton acceptor. A cross-link (tryptophyl-tyrosyl-methioninium (Tyr-Met) (with W-105)) is located at residues 226-252; it reads YVNPEGPDHSGEPLSAAAAIRATFGNM. His267 provides a ligand contact to heme b.

The protein belongs to the peroxidase family. Peroxidase/catalase subfamily. As to quaternary structure, homodimer or homotetramer. The cofactor is heme b. Formation of the three residue Trp-Tyr-Met cross-link is important for the catalase, but not the peroxidase activity of the enzyme.

The catalysed reaction is H2O2 + AH2 = A + 2 H2O. The enzyme catalyses 2 H2O2 = O2 + 2 H2O. Bifunctional enzyme with both catalase and broad-spectrum peroxidase activity. This chain is Catalase-peroxidase, found in Salmonella heidelberg (strain SL476).